The sequence spans 607 residues: Guanine nucleotide-binding protein-like 1 (607 aa).

The span at 1-14 shows a compositional bias: basic residues; the sequence is MPRKKPFSVKQKKK. The disordered stretch occupies residues 1–81; sequence MPRKKPFSVK…GPRGYDPNRY (81 aa). Residues 15 to 26 show a composition bias toward basic and acidic residues; sequence QLQDKRERKRGL. 3 positions are modified to phosphoserine: S32, S33, and S34. T48 and T50 each carry phosphothreonine. Residues S51 and S68 each carry the phosphoserine modification. Residues 178-418 form the CP-type G domain; sequence WRQLWRVLEM…LCDCPGLIFP (241 aa). Residue 225 to 228 coordinates GTP; the sequence is NKVD. S324 bears the Phosphoserine mark. Residues 367 to 374 and 411 to 415 contribute to the GTP site; these read GFPNVGKS and DCPGL. The segment at 544 to 607 is disordered; that stretch reads GRVGPAGDEE…PYALLGEDEC (64 aa). The segment covering 550-585 has biased composition (acidic residues); the sequence is GDEEEEEEEELSSSCEEEGEEDRDADEEGEGDEDTP. A phosphoserine mark is found at S561, S562, and S563.

The protein belongs to the TRAFAC class YlqF/YawG GTPase family.

Its function is as follows. Possible regulatory or functional link with the histocompatibility cluster. In Mus musculus (Mouse), this protein is Guanine nucleotide-binding protein-like 1 (Gnl1).